A 208-amino-acid polypeptide reads, in one-letter code: MSLSTLLSLVDELQEPRSPIYELGLGLHPHSRYVLPLGTQQRRSINGCPCASPICPSSPAGQVLALRREMANRNDIHWPATAHVGKDGFQVCMDVAQFKPSELNVKVVDDSILVEGKHEERQDDHGHIMRHFVRRYKVPDGYKAEQVVSQLSSDGVLTVSIPKPQAVEDKSKERIIQIQQVGPAHLNVKANESEVKGKENGAPNGKDK.

S44, S52, and S58 each carry phosphoserine. The region spanning 71-179 (ANRNDIHWPA…KSKERIIQIQ (109 aa)) is the sHSP domain. Positions 187–208 (NVKANESEVKGKENGAPNGKDK) are disordered. Basic and acidic residues predominate over residues 191–208 (NESEVKGKENGAPNGKDK).

Belongs to the small heat shock protein (HSP20) family.

The chain is Heat shock protein 26 (Hsp26) from Drosophila melanogaster (Fruit fly).